The sequence spans 138 residues: Putative pre-16S rRNA nuclease (138 aa).

Belongs to the YqgF nuclease family.

It is found in the cytoplasm. Could be a nuclease involved in processing of the 5'-end of pre-16S rRNA. The protein is Putative pre-16S rRNA nuclease (yrrK) of Bacillus subtilis (strain 168).